Here is a 732-residue protein sequence, read N- to C-terminus: Beta-galactosidase 5 (732 aa).

Residues methionine 1 to serine 23 form the signal peptide. Glutamate 187 (proton donor) is an active-site residue. Glutamate 256 acts as the Nucleophile in catalysis. Asparagine 466 carries N-linked (GlcNAc...) asparagine glycosylation.

This sequence belongs to the glycosyl hydrolase 35 family. Expressed in leaves and flowers.

It is found in the secreted. The protein resides in the extracellular space. It localises to the apoplast. It catalyses the reaction Hydrolysis of terminal non-reducing beta-D-galactose residues in beta-D-galactosides.. The polypeptide is Beta-galactosidase 5 (BGAL5) (Arabidopsis thaliana (Mouse-ear cress)).